The chain runs to 688 residues: Lipase (688 aa).

An N-terminal signal peptide occupies residues 1–35 (MKTRQNKYSIRKFSVGASSILIAALLFMGGGSAQA). The disordered stretch occupies residues 31–309 (GSAQAAEQQQ…KSAKQKQYKN (279 aa)). A propeptide spans 36–302 (AEQQQDKGTV…KNEDQTNKSA (267 aa)) (removed in mature form). Over residues 45–54 (VENSTTQSIG) the composition is skewed to polar residues. 2 stretches are compositionally biased toward basic and acidic residues: residues 84-95 (ESLHNETPKNED) and 103-143 (SQND…KHAS). Composition is skewed to polar residues over residues 144–175 (ENNQ…AQQE) and 184–211 (KQDT…QSTE). Over residues 227 to 268 (KNDDDKVETFNLNSKEEPLKVDKQANPTTDKDKSSKNDKGSH) the composition is skewed to basic and acidic residues. Positions 274–289 (LESNAVATTNKQSKQQ) are enriched in polar residues. Serine 418 (nucleophile) is an active-site residue. The active-site Charge relay system is the aspartate 609. A Ca(2+)-binding site is contributed by aspartate 647. Catalysis depends on histidine 648, which acts as the Charge relay system. Positions 650, 655, and 658 each coordinate Ca(2+).

Belongs to the AB hydrolase superfamily. Lipase family.

It localises to the secreted. The catalysed reaction is a triacylglycerol + H2O = a diacylglycerol + a fatty acid + H(+). The chain is Lipase (lip) from Staphylococcus epidermidis (strain ATCC 35984 / DSM 28319 / BCRC 17069 / CCUG 31568 / BM 3577 / RP62A).